A 216-amino-acid polypeptide reads, in one-letter code: 3-isopropylmalate dehydratase small subunit (216 aa).

The protein belongs to the LeuD family. LeuD type 1 subfamily. In terms of assembly, heterodimer of LeuC and LeuD.

It catalyses the reaction (2R,3S)-3-isopropylmalate = (2S)-2-isopropylmalate. It participates in amino-acid biosynthesis; L-leucine biosynthesis; L-leucine from 3-methyl-2-oxobutanoate: step 2/4. Catalyzes the isomerization between 2-isopropylmalate and 3-isopropylmalate, via the formation of 2-isopropylmaleate. This is 3-isopropylmalate dehydratase small subunit from Methylibium petroleiphilum (strain ATCC BAA-1232 / LMG 22953 / PM1).